The following is a 99-amino-acid chain: Spore coat protein F-like protein YraD (99 aa).

The protein belongs to the CotF family.

It is found in the spore coat. This Bacillus subtilis (strain 168) protein is Spore coat protein F-like protein YraD (yraD).